Consider the following 138-residue polypeptide: ATP synthase subunit g, mitochondrial (138 aa).

Belongs to the ATPase g subunit family. In terms of assembly, F-type ATP synthases have 2 components, the catalytic core F(1) and the membrane-embedded component F(0), linked together by a central stalk and a peripheral stalk. The central stalk, also called rotor shaft, is often seen as part of F(1). The peripheral stalk is seen as part of F(0). F(0) contains the membrane channel next to the rotor. F-type ATP synthases form dimers but each monomer functions independently in ATP generation. The dimer consists of 17 different polypeptides: ATP1 (subunit alpha, 3 molecules per monomer, part of F(1)), ATP2 (subunit beta, 3 copies per monomer, part of F(1)), ATP3 (subunit gamma, part of the central stalk), ATP4 (subunit b, part of the peripheral stalk), ATP5/OSCP (subunit 5/OSCP, part of the peripheral stalk), ATP6 (subunit a, part of the peripheral stalk), ATP7 (subunit d, part of the peripheral stalk), ATP8 (subunit 8, part of the peripheral stalk), OLI1 (subunit c, part of the rotor, 10 molecules per monomer), ATP14 (subunit h, part of the peripheral stalk), ATP15 (subunit epsilon, part of the central stalk), ATP16 (subunit delta, part of the central stalk), ATP17 (subunit f, part of the peripheral stalk), ATP18 (subunit i/j, part of the peripheral stalk), ATP19 (subunit k, dimer-specific, at interface between monomers), ATP20 (subunit g, at interface between monomers), TIM11 (subunit e, at interface between monomers).

Its subcellular location is the mitochondrion inner membrane. Mitochondrial membrane ATP synthase (F(1)F(0) ATP synthase or Complex V) produces ATP from ADP in the presence of a proton gradient across the membrane which is generated by electron transport complexes of the respiratory chain. F-type ATP synthases consist of two structural domains, F(1) - containing the extramembraneous catalytic core, and F(0) - containing the membrane proton channel, linked together by a central stalk and a peripheral stalk. During catalysis, ATP synthesis in the catalytic domain of F(1) is coupled via a rotary mechanism of the central stalk subunits to proton translocation. Part of the complex F(0) domain. Minor subunit located with subunit a/ATP6 in the membrane. Together with subunit e/TIM11, probably contributes to membrane curvature at the site of the ATP synthase dimer, ultimately contributing to formation of cristae. The sequence is that of ATP synthase subunit g, mitochondrial from Yarrowia lipolytica (strain CLIB 122 / E 150) (Yeast).